The primary structure comprises 385 residues: Meiosis-specific protein MEI4 (385 aa).

Residues methionine 1–threonine 126 are interaction with REC114. A disordered region spans residues alanine 86–glutamine 110. Over residues serine 92–serine 107 the composition is skewed to polar residues.

This sequence belongs to the MEI4L family. In terms of assembly, part of the MCD recombinosome complex, at least composed of IHO1, REC114 and MEI4. Forms a complex with REC114; the interaction is required for MEI4 stability. Interacts (via N-terminal domain) with REC114 (via C-terminal domain). Interacts with IHO1.

The protein localises to the chromosome. Functionally, required for DNA double-strand breaks (DSBs) formation in unsynapsed regions during meiotic recombination. Probably acts by forming a complex with IHO1 and REC114, which activates DSBs formation in unsynapsed regions, an essential step to ensure completion of synapsis. The chain is Meiosis-specific protein MEI4 from Homo sapiens (Human).